Consider the following 397-residue polypeptide: Acid extracellular protease (397 aa).

The signal sequence occupies residues 1–17 (MQFSLATLTTLLAFVAA). A Peptidase A1 domain is found at 61–378 (YQVQISLGGQ…DLERDEVSIA (318 aa)). Asp77 is a catalytic residue. Residue Asn88 is glycosylated (N-linked (GlcNAc...) asparagine). Residues Cys93 and Cys100 are joined by a disulfide bond. The active site involves Asp264. A disulfide bond links Cys303 and Cys343. Asn310 and Asn314 each carry an N-linked (GlcNAc...) asparagine glycan.

It belongs to the peptidase A1 family.

The protein localises to the secreted. In Yarrowia lipolytica (strain CLIB 122 / E 150) (Yeast), this protein is Acid extracellular protease (AXP1).